We begin with the raw amino-acid sequence, 506 residues long: Cytochrome P450 monooxygenase TES1 (506 aa).

Residues 26-46 (MSVVLAGLILLASIYFPRFMF) traverse the membrane as a helical segment. N-linked (GlcNAc...) asparagine glycosylation is found at Asn167, Asn201, Asn298, and Asn427. A heme-binding site is contributed by Cys440.

It belongs to the cytochrome P450 family. The cofactor is heme.

Its subcellular location is the membrane. Its pathway is phytotoxin biosynthesis. Its function is as follows. Cytochrome P450 monooxygenase; part of the gene cluster that mediates the biosynthesis of the phytotoxin tentoxin, an inhibitor the F1-ATPase activity of chloroplasts, resulting in chlorosis in sensitive plants. Tentoxin is a cyclic tetrapeptide that consists of four amino acid residues: glycine (Gly), alanine (Ala), leucine (Leu), and dehydrophenylalanine (DPhe). In addition, both the Ala and DPhe residues are N-methylated. The nonribosomal peptide synthetase TES assembles tentoxin from the four substrate amino acids. The adenylation domains of each of the 4 modules are responsible for the activation of Gly, Ala, Leu and DPhe, respectively. In addition, the N-methyltransferase domains in the second and fourth modules of TES could be responsible for N-methylation of Ala and DPhe residues. Finally, the condensation domain located in the termination module probably catalyzes the formation of the intramolecular macrocyclization and then the release of tentoxin. The cytochrome P450 monooxygenase TES1 is predicted to be involved in the formation of DPhe. The chain is Cytochrome P450 monooxygenase TES1 from Alternaria alternata (Alternaria rot fungus).